The primary structure comprises 502 residues: Glucose-6-phosphate isomerase (502 aa).

Catalysis depends on Glu331, which acts as the Proton donor. Active-site residues include His362 and Lys471.

It belongs to the GPI family.

The protein localises to the cytoplasm. The catalysed reaction is alpha-D-glucose 6-phosphate = beta-D-fructose 6-phosphate. Its pathway is carbohydrate biosynthesis; gluconeogenesis. It functions in the pathway carbohydrate degradation; glycolysis; D-glyceraldehyde 3-phosphate and glycerone phosphate from D-glucose: step 2/4. Functionally, catalyzes the reversible isomerization of glucose-6-phosphate to fructose-6-phosphate. The sequence is that of Glucose-6-phosphate isomerase from Xylella fastidiosa (strain M12).